We begin with the raw amino-acid sequence, 390 residues long: Chorismate synthase 1 (390 aa).

NADP(+) is bound by residues Arg39 and Arg45. The tract at residues 95 to 117 is disordered; it reads EQEEKEMKRKVTKPRPGHADLNG. Residues 132–134, 253–254, Gly298, 313–317, and Arg339 contribute to the FMN site; these read RSS, NA, and KPIPT.

It belongs to the chorismate synthase family. In terms of assembly, homotetramer. FMNH2 is required as a cofactor.

The catalysed reaction is 5-O-(1-carboxyvinyl)-3-phosphoshikimate = chorismate + phosphate. Its pathway is metabolic intermediate biosynthesis; chorismate biosynthesis; chorismate from D-erythrose 4-phosphate and phosphoenolpyruvate: step 7/7. Functionally, catalyzes the anti-1,4-elimination of the C-3 phosphate and the C-6 proR hydrogen from 5-enolpyruvylshikimate-3-phosphate (EPSP) to yield chorismate, which is the branch point compound that serves as the starting substrate for the three terminal pathways of aromatic amino acid biosynthesis. This reaction introduces a second double bond into the aromatic ring system. The polypeptide is Chorismate synthase 1 (Bacillus thuringiensis (strain Al Hakam)).